The chain runs to 119 residues: Basic phospholipase A2 taipoxin alpha chain (119 aa).

Intrachain disulfides connect cysteine 11–cysteine 72, cysteine 27–cysteine 118, cysteine 29–cysteine 45, cysteine 44–cysteine 99, cysteine 51–cysteine 92, cysteine 61–cysteine 85, and cysteine 79–cysteine 90. Residues tyrosine 28, glycine 30, and glycine 32 each contribute to the Ca(2+) site. Histidine 48 is an active-site residue. Residue aspartate 49 participates in Ca(2+) binding. Residue aspartate 93 is part of the active site.

It belongs to the phospholipase A2 family. Group I subfamily. D49 sub-subfamily. Heterotrimer of alpha, beta, and gamma chains; non-covalently linked. It depends on Ca(2+) as a cofactor. Expressed by the venom gland.

It localises to the secreted. The catalysed reaction is a 1,2-diacyl-sn-glycero-3-phosphocholine + H2O = a 1-acyl-sn-glycero-3-phosphocholine + a fatty acid + H(+). In terms of biological role, heterotrimer: Snake venom phospholipase A2 (PLA2) heterotrimer that acts as a potent presynaptic neurotoxin by blocking synaptic transmission and synaptic vesicle recycling. May act by binding in a calcium-dependent fashion to neurotonal pentraxin-1 (NPTX1) and neurotonal pentraxin-2 (NPTX2), but not to neuronal pentraxin receptor (NPTXR). Also binds to taipoxin-associated calcium binding protein 49 (RCN2), a protein localized in the lumen of endoplasmic reticulum. Monomer (alpha chain): Snake venom phospholipase A2 (PLA2) alpha chain that possesses the same high enzymatic activity as the heterotrimer. PLA2 catalyzes the calcium-dependent hydrolysis of the 2-acyl groups in 3-sn-phosphoglycerides. This chain is Basic phospholipase A2 taipoxin alpha chain, found in Oxyuranus scutellatus scutellatus (Australian taipan).